Here is a 308-residue protein sequence, read N- to C-terminus: N-acetyl-gamma-glutamyl-phosphate reductase (308 aa).

The active site involves C117.

It belongs to the NAGSA dehydrogenase family. Type 2 subfamily.

It localises to the cytoplasm. It catalyses the reaction N-acetyl-L-glutamate 5-semialdehyde + phosphate + NADP(+) = N-acetyl-L-glutamyl 5-phosphate + NADPH + H(+). Its pathway is amino-acid biosynthesis; L-arginine biosynthesis; N(2)-acetyl-L-ornithine from L-glutamate: step 3/4. Functionally, catalyzes the NADPH-dependent reduction of N-acetyl-5-glutamyl phosphate to yield N-acetyl-L-glutamate 5-semialdehyde. In Sinorhizobium fredii (strain NBRC 101917 / NGR234), this protein is N-acetyl-gamma-glutamyl-phosphate reductase.